Consider the following 426-residue polypeptide: Enolase (426 aa).

Gln-163 is a binding site for (2R)-2-phosphoglycerate. The active-site Proton donor is Glu-205. 3 residues coordinate Mg(2+): Asp-242, Glu-286, and Asp-313. The (2R)-2-phosphoglycerate site is built by Lys-338, Arg-367, Ser-368, and Lys-389. The Proton acceptor role is filled by Lys-338.

This sequence belongs to the enolase family. The cofactor is Mg(2+).

It localises to the cytoplasm. The protein localises to the secreted. Its subcellular location is the cell surface. The catalysed reaction is (2R)-2-phosphoglycerate = phosphoenolpyruvate + H2O. Its pathway is carbohydrate degradation; glycolysis; pyruvate from D-glyceraldehyde 3-phosphate: step 4/5. In terms of biological role, catalyzes the reversible conversion of 2-phosphoglycerate (2-PG) into phosphoenolpyruvate (PEP). It is essential for the degradation of carbohydrates via glycolysis. This Helicobacter pylori (strain J99 / ATCC 700824) (Campylobacter pylori J99) protein is Enolase.